The sequence spans 138 residues: Basic phospholipase A2 vaspin B chain (138 aa).

Residues 1-16 (MRILWIVAVCLIGVEG) form the signal peptide. Disulfide bonds link Cys42/Cys131, Cys44/Cys60, Cys59/Cys111, Cys65/Cys138, Cys66/Cys104, Cys73/Cys97, and Cys91/Cys102. The Ca(2+) site is built by Tyr43, Gly45, and Gly47. His63 is an active-site residue. Asp64 contacts Ca(2+). The active site involves Asp105.

The protein belongs to the phospholipase A2 family. Group II subfamily. D49 sub-subfamily. In terms of assembly, heterodimer of a weakly toxic basic protein having phospholipase A2 activity (B chain (AC Q8JFG1)) and a non-toxic acidic protein functioning as its inhibitor (A chain). The cofactor is Ca(2+). In terms of tissue distribution, expressed by the venom gland.

It localises to the secreted. It catalyses the reaction a 1,2-diacyl-sn-glycero-3-phosphocholine + H2O = a 1-acyl-sn-glycero-3-phosphocholine + a fatty acid + H(+). Its function is as follows. Heterodimer: postsynaptic neurotoxin. Monomer: snake venom phospholipase A2 (PLA2) that shows postsynaptic neurotoxicity. PLA2 catalyzes the calcium-dependent hydrolysis of the 2-acyl groups in 3-sn-phosphoglycerides. This chain is Basic phospholipase A2 vaspin B chain, found in Vipera aspis aspis (Aspic viper).